Reading from the N-terminus, the 489-residue chain is Probable transporter MCH1 (489 aa).

Helical transmembrane passes span 30–50 (IAYIFALFAAITSGFVSLISL), 68–88 (MIVTVINMGMYLTPPILGIIA), and 92–112 (GPITLSLSSVLGFIPSYAYLA). A glycan (N-linked (GlcNAc...) asparagine) is linked at Asn123. 8 helical membrane passes run 132–152 (TLVCFFIIGVATSGLYFSALI), 163–183 (LLSISIPTTCYGLSSLIGSQF), 202–222 (VFKAFAWIYTVIGVMIWIATS), 279–299 (VLYIFGATIFCALGPLEMFIA), 307–327 (VLAGGHEPAMSSALLSIYALT), 351–371 (WILLLFLVVGLVTQGKIYMLS), 388–408 (FYIGIMQGIAYGGLFTIYPTI), and 421–441 (AYGTLMIAPALGSALSCLIYA). Residue Asn450 is glycosylated (N-linked (GlcNAc...) asparagine). A helical membrane pass occupies residues 462-482 (ETTALEFCAAILLTVVVTVLW).

Belongs to the major facilitator superfamily.

The protein resides in the vacuole membrane. Its function is as follows. Probable transporter. This Candida glabrata (strain ATCC 2001 / BCRC 20586 / JCM 3761 / NBRC 0622 / NRRL Y-65 / CBS 138) (Yeast) protein is Probable transporter MCH1 (MCH1).